The following is a 134-amino-acid chain: SNAPIN protein homolog (134 aa).

The stretch at 50-124 (QLQAELRGQL…EKEQRRRQAL (75 aa)) forms a coiled coil.

Belongs to the SNAPIN family. As to quaternary structure, component of the biogenesis of lysosome-related organelles complex-1 (BLOC-1) composed of Blos1, Blos2, Blos3, Blos4, Dysb, Muted, Pldn and Snapin. Interacts with Blos2 and Dysb.

It localises to the membrane. The protein resides in the cytoplasm. It is found in the cytosol. Component of the biogenesis of lysosome-related organelles complex-1 (BLOC-1) involved in pigment granule biogenesis. May participate in the coupling of lysosomes to microtubule plus-end-directed kinesin motor. In Drosophila melanogaster (Fruit fly), this protein is SNAPIN protein homolog.